A 329-amino-acid chain; its full sequence is Prostaglandin reductase 1 (329 aa).

Thr-18 is subject to Phosphothreonine. Ser-20 bears the Phosphoserine mark. Residues 152-155 (GAVG), Lys-178, Tyr-193, Asn-217, 239-245 (CGAISVY), 270-272 (FIV), and Asn-321 contribute to the NADP(+) site. Lys-178 carries the post-translational modification N6-(2-hydroxyisobutyryl)lysine; alternate. Lys-178 is subject to N6-acetyllysine; alternate.

It belongs to the NADP-dependent oxidoreductase L4BD family. Monomer or homodimer. As to expression, detected in small intestine, kidney, liver, spleen and stomach (at protein level). Detected in small intestine, kidney and liver.

It localises to the cytoplasm. It catalyses the reaction 13,14-dihydro-15-oxo-prostaglandin E1 + NADP(+) = 15-oxoprostaglandin E1 + NADPH + H(+). It carries out the reaction 13,14-dihydro-15-oxo-prostaglandin E2 + NAD(+) = 15-oxoprostaglandin E2 + NADH + H(+). The enzyme catalyses 13,14-dihydro-15-oxo-prostaglandin F1alpha + NADP(+) = 15-oxoprostaglandin F1alpha + NADPH + H(+). The catalysed reaction is 13,14-dihydro-15-oxo-PGF2alpha + NADP(+) = 15-oxoprostaglandin F2alpha + NADPH + H(+). It catalyses the reaction leukotriene B4 + NADP(+) = 12-oxo-leukotriene B4 + NADPH + H(+). It carries out the reaction 20-hydroxy-leukotriene B4 + NADP(+) = 12-oxo-20-hydroxy-leukotriene B4 + NADPH + H(+). The enzyme catalyses 6-trans-leukotriene B4 + NADP(+) = 12-oxo-(5S)-hydroxy-(6E,8E,10E,14Z)-eicosatetraenoate + NADPH + H(+). The catalysed reaction is (5S,12S)-dihydroxy-(6E,10E,12E,14Z)-eicosatetraenoate + NADP(+) = 12-oxo-(5S)-hydroxy-(6E,8E,10E,14Z)-eicosatetraenoate + NADPH + H(+). It catalyses the reaction an n-alkanal + NADP(+) = an alk-2-enal + NADPH + H(+). It carries out the reaction hexanal + NADP(+) = (E)-hex-2-enal + NADPH + H(+). The enzyme catalyses octanal + NADP(+) = (2E)-octenal + NADPH + H(+). The catalysed reaction is decanal + NADP(+) = (2E)-decenal + NADPH + H(+). It catalyses the reaction dodecanal + NADP(+) = (2E)-dodecenal + NADPH + H(+). It carries out the reaction 4-hydroxynonanal + NADP(+) = (E)-4-hydroxynon-2-enal + NADPH + H(+). The enzyme catalyses pentan-2-one + NADP(+) = (E)-pent-3-en-2-one + NADPH + H(+). The catalysed reaction is nonan-2-one + NADP(+) = (3E)-nonen-2-one + NADPH + H(+). NAD(P)H-dependent oxidoreductase involved in metabolic inactivation of pro- and anti-inflammatory eicosanoids: prostaglandins (PG), leukotrienes (LT) and lipoxins (LX). Catalyzes with high efficiency the reduction of the 13,14 double bond of 15-oxoPGs, including 15-oxo-PGE1, 15-oxo-PGE2, 15-oxo-PGF1-alpha and 15-oxo-PGF2-alpha. Catalyzes with lower efficiency the oxidation of the hydroxyl group at C12 of LTB4 and its derivatives, converting them into biologically less active 12-oxo-LTB4 metabolites. Reduces 15-oxo-LXA4 to 13,14 dihydro-15-oxo-LXA4, enhancing neutrophil recruitment at the inflammatory site. Plays a role in metabolic detoxification of alkenals and ketones. Reduces alpha,beta-unsaturated alkenals and ketones, particularly those with medium-chain length, showing highest affinity toward (2E)-decenal and (3E)-3-nonen-2-one. May inactivate 4-hydroxy-2-nonenal, a cytotoxic lipid constituent of oxidized low-density lipoprotein particles. This chain is Prostaglandin reductase 1 (Ptgr1), found in Cavia porcellus (Guinea pig).